A 182-amino-acid polypeptide reads, in one-letter code: Thioredoxin F-type, chloroplastic (182 aa).

Residues 1–22 form a disordered region; that stretch reads MPLSLRLAPSPTALSPTTGGFS. The Thioredoxin domain maps to 52–177; the sequence is KRGDSSVVRC…LVAAIETARS (126 aa). Active-site nucleophile residues include cysteine 102 and cysteine 105. A disulfide bond links cysteine 102 and cysteine 105.

This sequence belongs to the thioredoxin family. Plant F-type subfamily. Forms a complex with heterodimeric ferredoxin-thioredoxin reductase (FTR) and ferredoxin.

Its subcellular location is the plastid. It localises to the chloroplast. In terms of biological role, participates in various redox reactions through the reversible oxidation of the active center dithiol to a disulfide. The F form is known to activate a number of enzymes of the photosynthetic carbon cycle. This is Thioredoxin F-type, chloroplastic (TRXF) from Brassica napus (Rape).